The chain runs to 504 residues: Peroxisomal catalase (504 aa).

Residues H63 and N136 contribute to the active site. Y345 is a binding site for heme. A Microbody targeting signal motif is present at residues N502–F504.

This sequence belongs to the catalase family. It depends on heme as a cofactor.

It is found in the peroxisome matrix. It carries out the reaction 2 H2O2 = O2 + 2 H2O. Catalyzes the degradation of hydrogen peroxide (H(2)O(2)) generated by peroxisomal oxidases to water and oxygen, thereby protecting cells from the toxic effects of hydrogen peroxide. The protein is Peroxisomal catalase (CTA1) of Candida boidinii (Yeast).